A 386-amino-acid polypeptide reads, in one-letter code: Formate-dependent phosphoribosylglycinamide formyltransferase (386 aa).

Residues 15 to 16 and E75 contribute to the N(1)-(5-phospho-beta-D-ribosyl)glycinamide site; that span reads EL. Residues R107, K148, 153 to 158, 188 to 191, and E196 contribute to the ATP site; these read SSGKGQ and EQFI. The ATP-grasp domain maps to 112–301; the sequence is ALAVQQLNLQ…EFELHLRAIV (190 aa). The Mg(2+) site is built by E260 and E272. Residues D279, K349, and 356–357 each bind N(1)-(5-phospho-beta-D-ribosyl)glycinamide; that span reads RR.

Belongs to the PurK/PurT family. In terms of assembly, homodimer.

It carries out the reaction N(1)-(5-phospho-beta-D-ribosyl)glycinamide + formate + ATP = N(2)-formyl-N(1)-(5-phospho-beta-D-ribosyl)glycinamide + ADP + phosphate + H(+). It participates in purine metabolism; IMP biosynthesis via de novo pathway; N(2)-formyl-N(1)-(5-phospho-D-ribosyl)glycinamide from N(1)-(5-phospho-D-ribosyl)glycinamide (formate route): step 1/1. Its function is as follows. Involved in the de novo purine biosynthesis. Catalyzes the transfer of formate to 5-phospho-ribosyl-glycinamide (GAR), producing 5-phospho-ribosyl-N-formylglycinamide (FGAR). Formate is provided by PurU via hydrolysis of 10-formyl-tetrahydrofolate. The sequence is that of Formate-dependent phosphoribosylglycinamide formyltransferase from Francisella tularensis subsp. holarctica (strain LVS).